The primary structure comprises 231 residues: Adenosylcobinamide-GDP ribazoletransferase (231 aa).

5 helical membrane-spanning segments follow: residues 28–48 (LWLF…PHFI), 97–117 (TGAG…TLLY), 121–141 (FWEI…LMLL), 162–182 (VFIG…ESLA), and 209–229 (VIGS…TIAG).

The protein belongs to the CobS family. Mg(2+) serves as cofactor.

It is found in the cell membrane. It carries out the reaction alpha-ribazole + adenosylcob(III)inamide-GDP = adenosylcob(III)alamin + GMP + H(+). The catalysed reaction is alpha-ribazole 5'-phosphate + adenosylcob(III)inamide-GDP = adenosylcob(III)alamin 5'-phosphate + GMP + H(+). It functions in the pathway cofactor biosynthesis; adenosylcobalamin biosynthesis; adenosylcobalamin from cob(II)yrinate a,c-diamide: step 7/7. Its function is as follows. Joins adenosylcobinamide-GDP and alpha-ribazole to generate adenosylcobalamin (Ado-cobalamin). Also synthesizes adenosylcobalamin 5'-phosphate from adenosylcobinamide-GDP and alpha-ribazole 5'-phosphate. The chain is Adenosylcobinamide-GDP ribazoletransferase (cobS2) from Archaeoglobus fulgidus (strain ATCC 49558 / DSM 4304 / JCM 9628 / NBRC 100126 / VC-16).